We begin with the raw amino-acid sequence, 1133 residues long: Myb-binding protein 1A (1133 aa).

4 disordered regions span residues Met-1 to Ala-62, Pro-718 to Ser-764, Gly-924 to Ala-943, and Lys-1111 to Thr-1133. Basic and acidic residues-rich tracts occupy residues Lys-20–Ala-35 and Glu-50–Asn-60. 2 stretches are compositionally biased toward acidic residues: residues Gly-725–Lys-735 and Asp-744–Ala-762.

This sequence belongs to the MYBBP1A family. Interacts with nclb.

It is found in the cytoplasm. The protein localises to the nucleus. Its subcellular location is the nucleolus. Its function is as follows. Has a role in rRNA biogenesis, cell proliferation and tissue growth by contributing to the localization of nclb to the nucleolus. This chain is Myb-binding protein 1A, found in Drosophila melanogaster (Fruit fly).